Consider the following 247-residue polypeptide: MQYNFKVEAFEGPLDLLLHLIHRYEIDIYNIPVAEITEQYLSYVHTMKELQLDVASEYLVMAATLLQIKSKMLLPKHEEDVLDNGDDFIDDPRQELMERLIEYKKYKQVATELKEREQERAQLYTRPPIDFTSLQQEEETNLPLDVTLYDMLAAFQKLMRRKKAKKPVTTRITRQEIPIEQRMTDILKQLEIQGGRQSFYDLFVDDEREIMVVTFLAVLELMKNQQIIIEQEHNFDEIFVSSYTKSA.

The protein belongs to the ScpA family. In terms of assembly, component of a cohesin-like complex composed of ScpA, ScpB and the Smc homodimer, in which ScpA and ScpB bind to the head domain of Smc. The presence of the three proteins is required for the association of the complex with DNA.

The protein resides in the cytoplasm. Its function is as follows. Participates in chromosomal partition during cell division. May act via the formation of a condensin-like complex containing Smc and ScpB that pull DNA away from mid-cell into both cell halves. This chain is Segregation and condensation protein A, found in Bacillus cereus (strain 03BB102).